The following is a 342-amino-acid chain: Cyclin-dependent kinase-like 4 (342 aa).

The Protein kinase domain occupies 4-286 (YEKLAKIGEG…CAQLLDSAYF (283 aa)). ATP is bound by residues 10 to 18 (IGEGSYGVV) and lysine 33. A [NKR]KIAxRE motif is present at residues 45–51 (RKIALRE). The active-site Proton acceptor is the aspartate 126. A disordered region spans residues 295–328 (KRKARSEGRSRRRQQNQLLPLIPGSHISPTPDGR).

This sequence belongs to the protein kinase superfamily. CMGC Ser/Thr protein kinase family. CDC2/CDKX subfamily.

It is found in the cytoplasm. It catalyses the reaction L-seryl-[protein] + ATP = O-phospho-L-seryl-[protein] + ADP + H(+). The enzyme catalyses L-threonyl-[protein] + ATP = O-phospho-L-threonyl-[protein] + ADP + H(+). In Mus musculus (Mouse), this protein is Cyclin-dependent kinase-like 4 (Cdkl4).